The chain runs to 132 residues: Small ribosomal subunit protein uS11 (132 aa).

It belongs to the universal ribosomal protein uS11 family. In terms of assembly, part of the 30S ribosomal subunit. Interacts with proteins S7 and S18. Binds to IF-3.

Its function is as follows. Located on the platform of the 30S subunit, it bridges several disparate RNA helices of the 16S rRNA. Forms part of the Shine-Dalgarno cleft in the 70S ribosome. In Alcanivorax borkumensis (strain ATCC 700651 / DSM 11573 / NCIMB 13689 / SK2), this protein is Small ribosomal subunit protein uS11.